We begin with the raw amino-acid sequence, 606 residues long: Mitogen-activated protein kinase kinase kinase 7 (606 aa).

An interaction with MAPK8IP1 region spans residues 1 to 300; sequence MSTASAASSS…FPGADEPLQY (300 aa). The 256-residue stretch at 36-291 folds into the Protein kinase domain; it reads IEVEEVVGRG…KIMTHLMRYF (256 aa). ATP-binding positions include 42 to 50 and lysine 63; that span reads VGRGAFGVV. A Glycyl lysine isopeptide (Lys-Gly) (interchain with G-Cter in ubiquitin) cross-link involves residue lysine 72. Aspartate 156 (proton acceptor) is an active-site residue. A Glycyl lysine isopeptide (Lys-Gly) (interchain with G-Cter in ubiquitin) cross-link involves residue lysine 158. Phosphothreonine; by autocatalysis is present on residues threonine 184 and threonine 187. Serine 192 carries the phosphoserine; by autocatalysis modification. Residue lysine 209 forms a Glycyl lysine isopeptide (Lys-Gly) (interchain with G-Cter in ubiquitin) linkage. 2 disordered regions span residues 301-338 and 354-391; these read PCQY…MEQV and KNQA…MSAD. The segment covering 306-338 has biased composition (polar residues); sequence DEGQSNSATSTGSFMDIASTNTSNKSDTNMEQV. Over residues 361–375 the composition is skewed to low complexity; the sequence is SESGRLSLGASRGSS. A phosphoserine mark is found at serine 367, serine 389, and serine 439. Residues 443 to 452 show a composition bias toward polar residues; that stretch reads LTVTGTEPGQ. The segment at 443–493 is disordered; it reads LTVTGTEPGQVSSRSSSPSVRMITTSGPTSEKPTRSHPWTPDDSTDTNGSD. Residues 453–463 are compositionally biased toward low complexity; that stretch reads VSSRSSSPSVR. Serine 455 bears the Phosphoserine mark. A compositionally biased stretch (polar residues) spans 464 to 473; the sequence is MITTSGPTSE.

This sequence belongs to the protein kinase superfamily. STE Ser/Thr protein kinase family. MAP kinase kinase kinase subfamily. Can form homodimer. Binds both upstream activators and downstream substrates in multimolecular complexes. Interacts with TAB1/MAP3K7IP1, TAB2/MAP3K7IP2 and TAB3/MAP3K7IP3. Identified in the TRIKA2 complex composed of MAP3K7/TAK1, TAB1/MAP3K7IP1 and TAB2/MAP3K7IP2. Interacts with PPM1L and PPM1B/PP2CB. Interaction with PP2A and PPP6C leads to its repressed activity. Interacts with TRAF6 and TAB1/MAP3K7IP1; during IL-1 signaling. Interacts with TAOK1 and TAOK2; interaction with TAOK2 interferes with MAP3K7 interaction with IKKA, thus preventing NF-kappa-B activation. Interacts with DYNC2I2 (via WD domains). Interacts with CYLD and RBCK1. Interacts with TGFBR1; induces MAP3K7/TAK1 activation by TRAF6. Interacts with MAPK8IP1 and SMAD6. Interacts with isoform 1 of VRK2. Interacts with DAB2; the interaction is induced by TGF-beta stimulation and may mediate TGF-beta stimulated JNK activation. Interacts with TRIM5. Part of a complex containing ITCH, NDFIP1 and MAP3K7. Interacts with IFIT5; the interaction synergizes the recruitment of IKK to MAP3K7 and enhances IKK phosphorylation. Interacts with PLEKHM1 (via N- and C-terminus). Found in a complex with SH3RF1, RAC2, MAP2K7/MKK7, MAPK8IP1/JIP1, MAPK8/JNK1 and MAPK9/JNK2. Interacts with SASH1. Interacts with RIPK1. The cofactor is Mg(2+). Post-translationally, association with TAB1/MAP3K7IP1 promotes autophosphorylation at Ser-192 and subsequent activation. Association with TAB2/MAP3K7IP2, itself associated with free unanchored Lys-63 polyubiquitin chain, promotes autophosphorylation and subsequent activation of MAP3K7. Dephosphorylation at Ser-192 by PPM1B/PP2CB and at Thr-187 by PP2A and PPP6C leads to inactivation. In terms of processing, 'Lys-48'-linked polyubiquitination at Lys-72 is induced by TNFalpha, and leads to proteasomal degradation. Undergoes 'Lys-48'-linked polyubiquitination catalyzed by ITCH. 'Lys-63'-linked polyubiquitination at Lys-158 by TRIM8 does not lead to proteasomal degradation but contributes to autophosphorylation and activation. Deubiquitinated by CYLD, a protease that selectively cleaves 'Lys-63'-linked ubiquitin chains. Deubiquitinated by USP19; leading to negative regulation of TNF-alpha- and IL-1beta-triggered NF-kappa-B activation.

It localises to the cytoplasm. Its subcellular location is the cell membrane. The catalysed reaction is L-seryl-[protein] + ATP = O-phospho-L-seryl-[protein] + ADP + H(+). It catalyses the reaction L-threonyl-[protein] + ATP = O-phospho-L-threonyl-[protein] + ADP + H(+). Its activity is regulated as follows. Activated by pro-inflammatory cytokines and in response to physical and chemical stresses, including osmotic stress, oxidative stress, arsenic and ultraviolet light irradiation. Activated by 'Lys-63'-linked polyubiquitination and by autophosphorylation. Association with TAB1/MAP3K7IP1 and TAB2/MAP3K7IP2 promotes activation through autophosphorylation, whereas PPM1B/PP2CB, PP2A and PPP6C dephosphorylation leads to inactivation. Ceramides are also able to activate MAP3K7/TAK1. Serine/threonine kinase which acts as an essential component of the MAP kinase signal transduction pathway. Plays an important role in the cascades of cellular responses evoked by changes in the environment. Mediates signal transduction of TRAF6, various cytokines including interleukin-1 (IL-1), transforming growth factor-beta (TGFB), TGFB-related factors like BMP2 and BMP4, toll-like receptors (TLR), tumor necrosis factor receptor CD40 and B-cell receptor (BCR). Once activated, acts as an upstream activator of the MKK/JNK signal transduction cascade and the p38 MAPK signal transduction cascade through the phosphorylation and activation of several MAP kinase kinases like MAP2K1/MEK1, MAP2K3/MKK3, MAP2K6/MKK6 and MAP2K7/MKK7. These MAP2Ks in turn activate p38 MAPKs and c-jun N-terminal kinases (JNKs); both p38 MAPK and JNK pathways control the transcription factors activator protein-1 (AP-1). Independently of MAP2Ks and p38 MAPKs, acts as a key activator of NF-kappa-B by promoting activation of the I-kappa-B-kinase (IKK) core complex. Mechanistically, recruited to polyubiquitin chains of RIPK2 and IKBKG/NEMO via TAB2/MAP3K7IP2 and TAB3/MAP3K7IP3, and catalyzes phosphorylation and activation of IKBKB/IKKB component of the IKK complex, leading to NF-kappa-B activation. In osmotic stress signaling, plays a major role in the activation of MAPK8/JNK1, but not that of NF-kappa-B. Promotes TRIM5 capsid-specific restriction activity. Phosphorylates RIPK1 at 'Ser-321' which positively regulates RIPK1 interaction with RIPK3 to promote necroptosis but negatively regulates RIPK1 kinase activity and its interaction with FADD to mediate apoptosis. Phosphorylates STING1 in response to cGAMP-activation, promoting association between STEEP1 and STING1 and STING1 translocation to COPII vesicles. This chain is Mitogen-activated protein kinase kinase kinase 7 (MAP3K7), found in Pongo abelii (Sumatran orangutan).